Reading from the N-terminus, the 173-residue chain is Superoxide dismutase [Cu-Zn] (173 aa).

The N-terminal stretch at 1 to 19 (MKRFSLAILALVVATGAQA) is a signal peptide. 3 residues coordinate Cu cation: His67, His69, and His92. Residues 72-113 (GSCQPATKDGKASAAESAGGHLDPQNTGKHEGPEGAGHLGDL) form a disordered region. A disulfide bridge connects residues Cys74 and Cys169. Zn(2+)-binding residues include His92, His101, His109, and Asp112. His147 contributes to the Cu cation binding site.

It belongs to the Cu-Zn superoxide dismutase family. As to quaternary structure, monomer. The cofactor is Cu cation. Zn(2+) is required as a cofactor.

The protein localises to the periplasm. The catalysed reaction is 2 superoxide + 2 H(+) = H2O2 + O2. In terms of biological role, destroys radicals which are normally produced within the cells and which are toxic to biological systems. In Escherichia coli O157:H7, this protein is Superoxide dismutase [Cu-Zn] (sodC).